The chain runs to 157 residues: Endoribonuclease YbeY (157 aa).

Zn(2+)-binding residues include histidine 114, histidine 118, and histidine 124.

The protein belongs to the endoribonuclease YbeY family. Zn(2+) serves as cofactor.

It is found in the cytoplasm. Its function is as follows. Single strand-specific metallo-endoribonuclease involved in late-stage 70S ribosome quality control and in maturation of the 3' terminus of the 16S rRNA. This chain is Endoribonuclease YbeY, found in Salmonella paratyphi A (strain AKU_12601).